The primary structure comprises 359 residues: Type-1 angiotensin II receptor (359 aa).

The Extracellular segment spans residues 1-25; the sequence is MILNSSTEDGIKRIQDDCPKAGRHN. An N-linked (GlcNAc...) asparagine glycan is attached at asparagine 4. Residues glutamine 15 and aspartate 17 each coordinate angiotensin II. Intrachain disulfides connect cysteine 18/cysteine 274 and cysteine 101/cysteine 180. A helical membrane pass occupies residues 26-55; it reads YIFVMIPTLYSIIFVVGIFGNSLVVIVIYF. At 56–61 the chain is on the cytoplasmic side; the sequence is YMKLKT. The chain crosses the membrane as a helical span at residues 62–89; that stretch reads VASVFLLNLALADLCFLLTLPLWAVYTA. At 90–98 the chain is on the extracellular side; that stretch reads MEYRWPFGN. A helical membrane pass occupies residues 99–125; it reads YLCKIASASVSFNLYASVFLLTCLSID. The Cytoplasmic segment spans residues 126–141; it reads RYVAIVHPMKSPVRRT. A helical transmembrane segment spans residues 142-165; that stretch reads MLMAKVTCIIIWLLAGLASLPTII. The Extracellular portion of the chain corresponds to 166–190; the sequence is HRNVFFIENTNITVCAFHYESQNST. Residue arginine 167 coordinates angiotensin II. Residue asparagine 176 is glycosylated (N-linked (GlcNAc...) asparagine). Angiotensin II contacts are provided by phenylalanine 182, histidine 183, and tyrosine 184. N-linked (GlcNAc...) asparagine glycosylation occurs at asparagine 188. A helical transmembrane segment spans residues 191–216; sequence LPIGLGLTKNILGFLFPFLIILTSYT. Lysine 199 contacts angiotensin II. At 217 to 239 the chain is on the cytoplasmic side; sequence LIWKTLKRAYEIQKNKPRNDDIF. The helical transmembrane segment at 240–268 threads the bilayer; sequence KIIMAIVLFFFFSWVPHQIFTFLDVLIQL. The Extracellular segment spans residues 269–278; it reads GIIHDCKIAD. Residues 279–304 form a helical membrane-spanning segment; it reads IVDTAMPITICIAYFNNCLNPLFYGF. Residues 305–359 are Cytoplasmic-facing; the sequence is LGKKFKKYFLQLLKYIPPKAKSHSSLSTKMSTLSYRPSDHGNASTKKSASCVEVE. The span at 335–352 shows a compositional bias: polar residues; sequence STLSYRPSDHGNASTKKS. The segment at 335-359 is disordered; that stretch reads STLSYRPSDHGNASTKKSASCVEVE. Cysteine 355 carries S-palmitoyl cysteine lipidation.

The protein belongs to the G-protein coupled receptor 1 family. Interacts with MAS1. Interacts with ARRB1. Interacts with FLNA (via filamin repeat 21); increases PKA-mediated phosphorylation of FLNA. Post-translationally, C-terminal Ser or Thr residues may be phosphorylated. Adrenal, liver, aorta, kidney, lung, testis and heart.

Its subcellular location is the cell membrane. Receptor for angiotensin II, a vasoconstricting peptide, which acts as a key regulator of blood pressure and sodium retention by the kidney. The activated receptor in turn couples to G-alpha proteins G(q) (GNAQ, GNA11, GNA14 or GNA15) and thus activates phospholipase C and increases the cytosolic Ca(2+) concentrations, which in turn triggers cellular responses such as stimulation of protein kinase C. This chain is Type-1 angiotensin II receptor (AGTR1), found in Canis lupus familiaris (Dog).